The chain runs to 205 residues: uncharacterized protein (205 aa).

In terms of domain architecture, HTH tetR-type spans Lys-11–Leu-71.

This is an uncharacterized protein from Haemophilus influenzae (strain ATCC 51907 / DSM 11121 / KW20 / Rd).